We begin with the raw amino-acid sequence, 241 residues long: Protein unc-119 homolog B-B (241 aa).

The disordered stretch occupies residues 1–46 (MSGSNREAALAGQPKDERKKSGGGVINRLKARRVQGKESGTSDQSS). Residue Tyr132 coordinates tetradecanoate.

Belongs to the PDE6D/unc-119 family.

It localises to the cell projection. The protein resides in the cilium. Functionally, myristoyl-binding protein that acts as a cargo adapter: specifically binds the myristoyl moiety of a subset of N-terminally myristoylated proteins and is required for their localization. Plays a key role in localization of proteins to the primary cilium membrane. This is Protein unc-119 homolog B-B (unc119b-b) from Xenopus laevis (African clawed frog).